Here is a 94-residue protein sequence, read N- to C-terminus: Translation initiation factor 1A 2 (94 aa).

Positions 6 to 80 constitute an S1-like domain; that stretch reads GRRNLRMPND…EKANVEWRYS (75 aa).

Belongs to the eIF-1A family.

Functionally, seems to be required for maximal rate of protein biosynthesis. Enhances ribosome dissociation into subunits and stabilizes the binding of the initiator Met-tRNA(I) to 40 S ribosomal subunits. The sequence is that of Translation initiation factor 1A 2 (eIF1A2) from Halobacterium salinarum (strain ATCC 700922 / JCM 11081 / NRC-1) (Halobacterium halobium).